A 460-amino-acid chain; its full sequence is MDEALNENASGSESDASSVASNLHDDEIIPWFFSREEIERNSPSRRDGIDLKTETRLRDSYCTFLEILGERLKVPQVTIATAIFFCHRFFLRQSHAKNDRQTIATVCMLLAGKVEETPVTLEDVIIASYERIHKKDLAGAQRKEVYDQQKELVLIGEELVLSTLNFDLCISHPYKPLVEAIKKYMVEDAKTQLAQFAWNFVNDCLRTTLCLQYQPHHIAAGAILLAAELPTVDLQSYREVLCQEFDITPCQLEDIRGQILELYERIPTSQESKVESSGGVAVVHQPISRDMASTEKCPSSDIEGGSSQVNLSQSDDHSVHDGSRSEGIGEVNSESEAQKNLQDHSVGNIMVEKSDDVGVVQLKKDLQLHQEEVESKQEKDKKSFEKDITKIDLMDEKDLTESEVEDEINKTMQTGRQIFMKVEDPDDNMTVEHSEIRNANNSGVDDELVADTCLINDSDL.

Disordered regions lie at residues 1–20 (MDEA…SSVA) and 285–345 (QPIS…QDHS). Basic and acidic residues predominate over residues 314 to 324 (SDDHSVHDGSR). Over residues 332–345 (NSESEAQKNLQDHS) the composition is skewed to polar residues.

The protein belongs to the cyclin family. Cyclin T subfamily.

The protein is Cyclin-T1-2 (CYCT1-2) of Arabidopsis thaliana (Mouse-ear cress).